The chain runs to 307 residues: Cysteine synthase (307 aa).

At lysine 42 the chain carries N6-(pyridoxal phosphate)lysine. Residues asparagine 72, 176-180 (GTGGH), and serine 263 each bind pyridoxal 5'-phosphate.

It belongs to the cysteine synthase/cystathionine beta-synthase family. Pyridoxal 5'-phosphate serves as cofactor.

The enzyme catalyses O-acetyl-L-serine + hydrogen sulfide = L-cysteine + acetate. It functions in the pathway amino-acid biosynthesis; L-cysteine biosynthesis; L-cysteine from L-serine: step 2/2. The protein is Cysteine synthase (cysK) of Flavobacterium sp. (strain K3-15 / DSM ID92-509).